The primary structure comprises 350 residues: 2-oxoisovalerate dehydrogenase subunit beta (350 aa).

In terms of assembly, heterodimer of an alpha and a beta chain. Thiamine diphosphate is required as a cofactor.

It catalyses the reaction N(6)-[(R)-lipoyl]-L-lysyl-[protein] + 3-methyl-2-oxobutanoate + H(+) = N(6)-[(R)-S(8)-2-methylpropanoyldihydrolipoyl]-L-lysyl-[protein] + CO2. Its function is as follows. The branched-chain alpha-keto dehydrogenase complex catalyzes the overall conversion of alpha-keto acids to acyl-CoA and CO(2). It contains multiple copies of three enzymatic components: branched-chain alpha-keto acid decarboxylase (E1), lipoamide acyltransferase (E2) and lipoamide dehydrogenase (E3). The protein is 2-oxoisovalerate dehydrogenase subunit beta (bkdA2) of Pseudomonas aeruginosa (strain ATCC 15692 / DSM 22644 / CIP 104116 / JCM 14847 / LMG 12228 / 1C / PRS 101 / PAO1).